Here is a 326-residue protein sequence, read N- to C-terminus: Biotin synthase (326 aa).

The Radical SAM core domain occupies 41–271; the sequence is YHVQLASLLS…EARVRLSAGR (231 aa). 3 residues coordinate [4Fe-4S] cluster: C56, C60, and C63. 4 residues coordinate [2Fe-2S] cluster: C102, C134, C194, and R266.

The protein belongs to the radical SAM superfamily. Biotin synthase family. In terms of assembly, homodimer. The cofactor is [4Fe-4S] cluster. It depends on [2Fe-2S] cluster as a cofactor.

It catalyses the reaction (4R,5S)-dethiobiotin + (sulfur carrier)-SH + 2 reduced [2Fe-2S]-[ferredoxin] + 2 S-adenosyl-L-methionine = (sulfur carrier)-H + biotin + 2 5'-deoxyadenosine + 2 L-methionine + 2 oxidized [2Fe-2S]-[ferredoxin]. Its pathway is cofactor biosynthesis; biotin biosynthesis; biotin from 7,8-diaminononanoate: step 2/2. In terms of biological role, catalyzes the conversion of dethiobiotin (DTB) to biotin by the insertion of a sulfur atom into dethiobiotin via a radical-based mechanism. The chain is Biotin synthase from Synechococcus sp. (strain RCC307).